A 320-amino-acid chain; its full sequence is ATP-dependent 6-phosphofructokinase (320 aa).

Gly-11 contacts ATP. Residue 21–25 (RAIAR) coordinates ADP. ATP is bound by residues 72–73 (RF) and 102–105 (GDGS). Asp-103 contributes to the Mg(2+) binding site. Substrate contacts are provided by residues 125 to 127 (TID), Arg-162, and 169 to 171 (MGR). Catalysis depends on Asp-127, which acts as the Proton acceptor. Residues 185-187 (GAD) and 213-215 (KDH) each bind ADP. Substrate contacts are provided by residues Glu-222, Arg-243, and 249–252 (HIQR).

This sequence belongs to the phosphofructokinase type A (PFKA) family. ATP-dependent PFK group I subfamily. Prokaryotic clade 'B1' sub-subfamily. As to quaternary structure, homotetramer. Requires Mg(2+) as cofactor.

Its subcellular location is the cytoplasm. The enzyme catalyses beta-D-fructose 6-phosphate + ATP = beta-D-fructose 1,6-bisphosphate + ADP + H(+). The protein operates within carbohydrate degradation; glycolysis; D-glyceraldehyde 3-phosphate and glycerone phosphate from D-glucose: step 3/4. Allosterically activated by ADP and other diphosphonucleosides, and allosterically inhibited by phosphoenolpyruvate. Functionally, catalyzes the phosphorylation of D-fructose 6-phosphate to fructose 1,6-bisphosphate by ATP, the first committing step of glycolysis. The polypeptide is ATP-dependent 6-phosphofructokinase (Ligilactobacillus salivarius (strain UCC118) (Lactobacillus salivarius)).